The sequence spans 121 residues: MMQGTCKISSIEKGALKNLYVVKMDCDNDLKIEFDITKELSIFSKDEEVTFIISREKPEYSEKDFCAHGYLFLERQQEDGSFIDEISLYGLIVKILSKNGLINSKLFKMMDHVYYCVKKKA.

This sequence belongs to the archaeal Rpo8 RNA polymerase subunit family. Part of the 13-subunit RNA polymerase complex. This subunit is phosphorylated.

The protein localises to the cytoplasm. It catalyses the reaction RNA(n) + a ribonucleoside 5'-triphosphate = RNA(n+1) + diphosphate. In terms of biological role, DNA-dependent RNA polymerase (RNAP) catalyzes the transcription of DNA into RNA using the four ribonucleoside triphosphates as substrates. This chain is DNA-directed RNA polymerase subunit Rpo8, found in Sulfolobus acidocaldarius (strain ATCC 33909 / DSM 639 / JCM 8929 / NBRC 15157 / NCIMB 11770).